An 898-amino-acid chain; its full sequence is Serine/threonine-protein kinase TAO3 (898 aa).

Positions 24 to 277 (FVGLHEIGHG…SADLLRHDFV (254 aa)) constitute a Protein kinase domain. Residues 30–38 (IGHGSFGAV) and Lys-53 each bind ATP. Asp-147 serves as the catalytic Proton acceptor. The disordered stretch occupies residues 316-374 (TRNGPLTESQEEEEDSEHGSNLSRKMDSLGSNHSIPSMSVSTGSQSSSVSSMQEVLDES). The segment covering 334–351 (GSNLSRKMDSLGSNHSIP) has biased composition (polar residues). The segment covering 352 to 368 (SMSVSTGSQSSSVSSMQ) has biased composition (low complexity). 3 coiled-coil regions span residues 452–502 (EQEN…THAN), 548–649 (FLES…HAML), and 754–875 (LKSL…IETF). The tract at residues 565–596 (EEMNEDHSTPKKEKQERISKHKENLQHTQAEE) is disordered.

It belongs to the protein kinase superfamily. STE Ser/Thr protein kinase family. STE20 subfamily.

It is found in the cytoplasm. Its subcellular location is the cell membrane. The protein resides in the membrane raft. It localises to the lipid droplet. It carries out the reaction L-seryl-[protein] + ATP = O-phospho-L-seryl-[protein] + ADP + H(+). The enzyme catalyses L-threonyl-[protein] + ATP = O-phospho-L-threonyl-[protein] + ADP + H(+). Its function is as follows. Serine/threonine-protein kinase that acts as a regulator of the p38/MAPK14 stress-activated MAPK cascade and of the MAPK8/JNK cascade. In response to DNA damage, involved in the G2/M transition DNA damage checkpoint by activating the p38/MAPK14 stress-activated MAPK cascade, probably by mediating phosphorylation of upstream MAP kinase kinases. Inhibits basal activity of the MAPK8/JNK cascade. This chain is Serine/threonine-protein kinase TAO3 (TAOK3), found in Gallus gallus (Chicken).